The chain runs to 104 residues: UPF0235 protein Sfri_2863 (104 aa).

This sequence belongs to the UPF0235 family.

The sequence is that of UPF0235 protein Sfri_2863 from Shewanella frigidimarina (strain NCIMB 400).